The chain runs to 348 residues: Ferrochelatase (348 aa).

Fe cation contacts are provided by His218 and Glu299.

Belongs to the ferrochelatase family.

The protein localises to the cytoplasm. It catalyses the reaction heme b + 2 H(+) = protoporphyrin IX + Fe(2+). Its pathway is porphyrin-containing compound metabolism; protoheme biosynthesis; protoheme from protoporphyrin-IX: step 1/1. Catalyzes the ferrous insertion into protoporphyrin IX. The protein is Ferrochelatase of Methylocella silvestris (strain DSM 15510 / CIP 108128 / LMG 27833 / NCIMB 13906 / BL2).